The primary structure comprises 532 residues: Copalyl diphosphate synthase (532 aa).

Residues 313 to 318 carry the DXDDTA motif motif; it reads DTDDTA. A QXXDGSW motif motif is present at residues 443–449; sequence QSDDGSW.

It belongs to the terpene synthase family. Mg(2+) is required as a cofactor.

It carries out the reaction (2E,6E,10E)-geranylgeranyl diphosphate = (+)-copalyl diphosphate. Involved in the biosynthesis of the mercapturic acid derivative diterpene cyslabdan A, a potentiator of the beta-lactam antibiotic imipenem. Catalyzes the conversion of geranylgeranyl diphosphate (GGDP) into (+)-copalyl diphosphate. This is Copalyl diphosphate synthase from Streptomyces cyslabdanicus.